Here is a 146-residue protein sequence, read N- to C-terminus: 3-dehydroquinate dehydratase (146 aa).

Catalysis depends on tyrosine 22, which acts as the Proton acceptor. 3 residues coordinate substrate: asparagine 73, histidine 79, and aspartate 86. Catalysis depends on histidine 99, which acts as the Proton donor. Residues 100-101 and arginine 110 each bind substrate; that span reads VS.

The protein belongs to the type-II 3-dehydroquinase family. In terms of assembly, homododecamer.

The enzyme catalyses 3-dehydroquinate = 3-dehydroshikimate + H2O. It functions in the pathway metabolic intermediate biosynthesis; chorismate biosynthesis; chorismate from D-erythrose 4-phosphate and phosphoenolpyruvate: step 3/7. Its function is as follows. Catalyzes a trans-dehydration via an enolate intermediate. This Kineococcus radiotolerans (strain ATCC BAA-149 / DSM 14245 / SRS30216) protein is 3-dehydroquinate dehydratase.